Reading from the N-terminus, the 474-residue chain is 3-isopropylmalate dehydratase large subunit (474 aa).

[4Fe-4S] cluster-binding residues include Cys353, Cys414, and Cys417.

This sequence belongs to the aconitase/IPM isomerase family. LeuC type 1 subfamily. In terms of assembly, heterodimer of LeuC and LeuD. [4Fe-4S] cluster serves as cofactor.

The enzyme catalyses (2R,3S)-3-isopropylmalate = (2S)-2-isopropylmalate. Its pathway is amino-acid biosynthesis; L-leucine biosynthesis; L-leucine from 3-methyl-2-oxobutanoate: step 2/4. Catalyzes the isomerization between 2-isopropylmalate and 3-isopropylmalate, via the formation of 2-isopropylmaleate. The sequence is that of 3-isopropylmalate dehydratase large subunit from Xylella fastidiosa (strain M12).